We begin with the raw amino-acid sequence, 123 residues long: Aberrant microtubules protein 1 (123 aa).

Its function is as follows. Required for normal microtubule organization. The chain is Aberrant microtubules protein 1 (ABM1) from Saccharomyces cerevisiae (strain ATCC 204508 / S288c) (Baker's yeast).